A 370-amino-acid polypeptide reads, in one-letter code: Cytochrome b (370 aa).

4 consecutive transmembrane segments (helical) span residues 25–45 (FGSM…FLAV), 69–90 (WMMQ…YIHI), 105–125 (WFSG…GYVL), and 170–190 (FFAL…LHIL). The heme b site is built by histidine 75 and histidine 89. Histidine 174 and histidine 188 together coordinate heme b. Residue histidine 193 coordinates a ubiquinone. The next 4 helical transmembrane spans lie at 218–238 (YKDM…VSFF), 280–300 (LGGA…PFTH), 312–332 (FMQL…WTAT), and 339–358 (FTTI…ISNP).

Belongs to the cytochrome b family. The cytochrome bc1 complex contains 3 respiratory subunits (MT-CYB, CYC1 and UQCRFS1), 2 core proteins (UQCRC1 and UQCRC2) and probably 6 low-molecular weight proteins. Requires heme b as cofactor.

The protein resides in the mitochondrion inner membrane. Functionally, component of the ubiquinol-cytochrome c reductase complex (complex III or cytochrome b-c1 complex) that is part of the mitochondrial respiratory chain. The b-c1 complex mediates electron transfer from ubiquinol to cytochrome c. Contributes to the generation of a proton gradient across the mitochondrial membrane that is then used for ATP synthesis. The protein is Cytochrome b (MT-CYB) of Chilabothrus strigilatus mccraniei (Ragged Island boa constrictor).